Consider the following 1235-residue polypeptide: Bromodomain-containing protein 8 (1235 aa).

An N6-acetyllysine modification is found at Lys85. Positions 97–171 form a coiled coil; the sequence is VRKLTAERVE…ATDAAYQARQ (75 aa). The residue at position 124 (Arg124) is a Phosphothreonine. Phosphoserine is present on residues Leu128 and Asp144. A disordered region spans residues 186–205; it reads RSPIDSASPGGDYPLGDLTP. At Ala264 the chain carries Phosphothreonine. A phosphoserine mark is found at Ser268, Ser284, Ser383, and Ser387. Lys469 participates in a covalent cross-link: Glycyl lysine isopeptide (Lys-Gly) (interchain with G-Cter in SUMO2). Position 481 is an N6-acetyllysine; alternate (Lys481). A Glycyl lysine isopeptide (Lys-Gly) (interchain with G-Cter in SUMO1); alternate cross-link involves residue Lys481. Residue Lys481 forms a Glycyl lysine isopeptide (Lys-Gly) (interchain with G-Cter in SUMO2); alternate linkage. Glycyl lysine isopeptide (Lys-Gly) (interchain with G-Cter in SUMO2) cross-links involve residues Lys509 and Lys575. The interval 551-597 is disordered; sequence TAAGEIVEADVAIGKGDETPLTNVKTEASPESMLSPSHGSNPIEDPL. A Phosphoserine modification is found at Ser579. A Glycyl lysine isopeptide (Lys-Gly) (interchain with G-Cter in SUMO2) cross-link involves residue Lys612. Phosphoserine is present on residues Ser621, Ser637, and Ser641. Positions 621–672 are disordered; sequence SQIKDAPGEDEEEDGVSEAASLEEPKEEDQGEGYLSEMDNEPPVSESDDGFS. Positions 706–811 constitute a Bromo 1 domain; that stretch reads IQAQKIWKKA…RDVLEQIQQF (106 aa). Disordered regions lie at residues 827–848, 903–940, and 966–999; these read AKSL…DSVP, ETED…AARK, and ESSE…ETEE. Over residues 831 to 846 the composition is skewed to basic and acidic residues; the sequence is RGRDSTRKQDASEKDS. A compositionally biased stretch (acidic residues) spans 905-915; that stretch reads EDPEAEELEES. Leu924 carries the post-translational modification Phosphoserine. Basic and acidic residues predominate over residues 979 to 999; sequence QEGREIKASEGERELCRETEE. In terms of domain architecture, Bromo 2 spans 1099–1207; that stretch reads DDPVQDHLLF…QEVLEQIQVL (109 aa).

In terms of assembly, component of the NuA4 histone acetyltransferase complex which contains the catalytic subunit KAT5/TIP60 and the subunits EP400, TRRAP/PAF400, BRD8/SMAP, EPC1, DMAP1/DNMAP1, RUVBL1/TIP49, RUVBL2, ING3, actin, ACTL6A/BAF53A, MORF4L1/MRG15, MORF4L2/MRGX, MRGBP, YEATS4/GAS41, VPS72/YL1 and MEAF6. The NuA4 complex interacts with MYC and the adenovirus E1A protein. Component of a NuA4-related complex which contains EP400, TRRAP/PAF400, SRCAP, BRD8/SMAP, EPC1, DMAP1/DNMAP1, RUVBL1/TIP49, RUVBL2, actin, ACTL6A/BAF53A, VPS72 and YEATS4/GAS41. BRD8 isoform 2 interacts with RXRA/NR2B1 and THRB/ERBA2. Component of a SWR1-like complex. As to expression, expressed in adipose tissue, brain, heart, kidney, liver, lung, pancreas, placenta and skeletal muscle.

The protein localises to the nucleus. Its function is as follows. May act as a coactivator during transcriptional activation by hormone-activated nuclear receptors (NR). Isoform 2 stimulates transcriptional activation by AR/DHTR, ESR1/NR3A1, RXRA/NR2B1 and THRB/ERBA2. At least isoform 1 and isoform 2 are components of the NuA4 histone acetyltransferase (HAT) complex which is involved in transcriptional activation of select genes principally by acetylation of nucleosomal histones H4 and H2A. This modification may both alter nucleosome - DNA interactions and promote interaction of the modified histones with other proteins which positively regulate transcription. This complex may be required for the activation of transcriptional programs associated with oncogene and proto-oncogene mediated growth induction, tumor suppressor mediated growth arrest and replicative senescence, apoptosis, and DNA repair. NuA4 may also play a direct role in DNA repair when recruited to sites of DNA damage. Component of a SWR1-like complex that specifically mediates the removal of histone H2A.Z/H2AZ1 from the nucleosome. In Homo sapiens (Human), this protein is Bromodomain-containing protein 8 (BRD8).